The chain runs to 493 residues: Cysteine sulfinic acid decarboxylase (493 aa).

Lysine 305 bears the N6-(pyridoxal phosphate)lysine mark.

It belongs to the group II decarboxylase family. Homodimer. Pyridoxal 5'-phosphate is required as a cofactor. As to expression, expressed in liver and brain. Also expressed in both astrocytes and neurons, but lower levels are expressed in astrocytes.

The enzyme catalyses L-aspartate + H(+) = beta-alanine + CO2. The catalysed reaction is 3-sulfino-L-alanine + H(+) = hypotaurine + CO2. It carries out the reaction L-cysteate + H(+) = taurine + CO2. Its pathway is organosulfur biosynthesis; taurine biosynthesis; hypotaurine from L-cysteine: step 2/2. Functionally, catalyzes the decarboxylation of L-aspartate, 3-sulfino-L-alanine (cysteine sulfinic acid), and L-cysteate to beta-alanine, hypotaurine and taurine, respectively. The preferred substrate is 3-sulfino-L-alanine. Does not exhibit any decarboxylation activity toward glutamate. The protein is Cysteine sulfinic acid decarboxylase (CSAD) of Homo sapiens (Human).